Reading from the N-terminus, the 114-residue chain is Pancreatic progenitor cell differentiation and proliferation factor (114 aa).

Position 9 is a phosphoserine (Ser9). Disordered regions lie at residues 22–47 (GSTS…PGLP) and 75–114 (AEHS…GPPS). The segment covering 23–33 (STSSNSSCSST) has biased composition (low complexity). Polar residues predominate over residues 102-114 (GGQSSTASAGPPS).

Belongs to the PPDPF family.

Functionally, probable regulator of exocrine pancreas development. In Homo sapiens (Human), this protein is Pancreatic progenitor cell differentiation and proliferation factor (PPDPF).